The sequence spans 452 residues: Enolase (452 aa).

Q167 is a binding site for (2R)-2-phosphoglycerate. Catalysis depends on E209, which acts as the Proton donor. Mg(2+)-binding residues include D250, E307, and D334. (2R)-2-phosphoglycerate is bound by residues K359, R388, S389, and K410. K359 serves as the catalytic Proton acceptor.

Belongs to the enolase family. It depends on Mg(2+) as a cofactor.

The protein resides in the cytoplasm. The protein localises to the secreted. It is found in the cell surface. The enzyme catalyses (2R)-2-phosphoglycerate = phosphoenolpyruvate + H2O. It functions in the pathway carbohydrate degradation; glycolysis; pyruvate from D-glyceraldehyde 3-phosphate: step 4/5. In terms of biological role, catalyzes the reversible conversion of 2-phosphoglycerate (2-PG) into phosphoenolpyruvate (PEP). It is essential for the degradation of carbohydrates via glycolysis. In Mesomycoplasma hyopneumoniae (strain 7448) (Mycoplasma hyopneumoniae), this protein is Enolase.